The primary structure comprises 557 residues: MAILNDPPSSTTILSLHTPDVPPPSKPTPATTSHPQDSRNPRNLTSKWPTAIDLAGSSLPCRLEGEVANLVVLGSIPPEINGTFYRVMCDPFVPPHPQNVPIDGDGNISAFRFHNGIVDMKMQYIETERYKLERQANKALFGLYRNPYTHHPCVRAAVDSTANTNLVMWADKLLALKEVGLPYEVDGDTLETLGYDPFASEGVESKTFTAHPKVDPFTDELVVFGYEAKGLATLDVVTYTLDAQGKKVEELWVKSPWCAFIHDCAITENWLILVCWCFEANIERMKKGGQHWAWDYEKPATFIVVPRRKSTPLPDGWKEGESRYYEWNNCMPVHTAGAWEGKDGKLYMESSRVHDNAFPFFPPDDGRMPNPDTKGDFARWEFDLSQPSGSKIQDPLVVLDIPCEFPRIDERFMTKEYEWVFLDVFIPEQGDGKSNIYQGLNGLAMHNNKTNETKYFYAGQDSHVQEPIFIPRSKDSKEGDGWVMAMVERRIANRCDLVVIDTRDFEKAIAIVELPFHIKAQIHGNWVGATETRGTKSLVREMEKIEISGKGALEPMA.

The interval 1–46 (MAILNDPPSSTTILSLHTPDVPPPSKPTPATTSHPQDSRNPRNLTS) is disordered. Piceatannol contacts are provided by Y144 and K177. The trans-resveratrol site is built by Y144 and K177. Fe cation-binding residues include H211, H262, and H334. Position 404 (E404) interacts with piceatannol. E404 provides a ligand contact to trans-resveratrol. Fe cation is bound at residue H523.

This sequence belongs to the carotenoid oxygenase family. It depends on Fe(2+) as a cofactor.

The catalysed reaction is trans-resveratrol + O2 = 3,5-dihydroxybenzaldehyde + 4-hydroxybenzaldehyde. It catalyses the reaction piceatannol + O2 = 3,5-dihydroxybenzaldehyde + 3,4-dihydroxybenzaldehyde. Dioxygenase that cleaves the interphenyl C-alpha-C-beta double bond of resveratrol to yield 3,5-dihydroxybenzaldehyde and 4-hydroxybenzaldehyde. Also cleaves piceatannol, a compound that differs from resveratrol only in the occurrence of an additional hydroxyl group, which leads to the production of 3,4-dihydroxybenzaldehyde and 3,5-hydroxybenzaldehyde. The polypeptide is Resveratrol cleavage oxygenase 1 (Botryotinia fuckeliana (strain B05.10) (Noble rot fungus)).